The following is a 240-amino-acid chain: LOB domain-containing protein 39 (240 aa).

The LOB domain maps to 1–107 (MSCNGCRVLR…VETVLRGGTL (107 aa)). The tract at residues 200 to 233 (GDRPGSPSEESVTTSCWENGMRGDNKQKRNKGEK) is disordered. Residues 207 to 216 (SEESVTTSCW) show a composition bias toward polar residues.

This sequence belongs to the LOB domain-containing protein family. As to expression, expressed in young shoots, roots, stems, leaves and flowers.

This Arabidopsis thaliana (Mouse-ear cress) protein is LOB domain-containing protein 39 (LBD39).